A 510-amino-acid polypeptide reads, in one-letter code: NAD(P)H-quinone oxidoreductase subunit 2, chloroplastic (510 aa).

The next 11 helical transmembrane spans lie at 24–44 (LLLFHGSFIFPECILIFGLIL), 59–79 (WFYFISSTSLVMSITALLFRW), 99–119 (IFQFLILLCSTLCIPLSVEYI), 124–144 (MAITEFLLFVLTATLGGMFLC), 149–169 (LITIFVAPECFSLCSYLLSGY), 183–203 (YLLMGGASSSILVHGFSWLYG), 295–315 (WHLLLEILAILSMILGNLIAI), 323–343 (MLAYSSIGQIGYVIIGIIVGD), 347–367 (GYASMITYMLFYISMNLGTFA), 395–415 (ALSSALCLLSLGGLPPLAGFF), and 418–438 (LHLFWCGWQAGLYFLVSIGLL).

It belongs to the complex I subunit 2 family. NDH is composed of at least 16 different subunits, 5 of which are encoded in the nucleus.

The protein resides in the plastid. It localises to the chloroplast thylakoid membrane. It carries out the reaction a plastoquinone + NADH + (n+1) H(+)(in) = a plastoquinol + NAD(+) + n H(+)(out). The catalysed reaction is a plastoquinone + NADPH + (n+1) H(+)(in) = a plastoquinol + NADP(+) + n H(+)(out). Functionally, NDH shuttles electrons from NAD(P)H:plastoquinone, via FMN and iron-sulfur (Fe-S) centers, to quinones in the photosynthetic chain and possibly in a chloroplast respiratory chain. The immediate electron acceptor for the enzyme in this species is believed to be plastoquinone. Couples the redox reaction to proton translocation, and thus conserves the redox energy in a proton gradient. The chain is NAD(P)H-quinone oxidoreductase subunit 2, chloroplastic from Maianthemum racemosum (False Solomon's-seal).